Consider the following 124-residue polypeptide: Phosphoribosyl-AMP cyclohydrolase (124 aa).

Asp-82 serves as a coordination point for Mg(2+). Cys-83 contributes to the Zn(2+) binding site. Residues Asp-84 and Asp-86 each contribute to the Mg(2+) site. Zn(2+)-binding residues include Cys-99 and Cys-106.

The protein belongs to the PRA-CH family. As to quaternary structure, homodimer. Mg(2+) serves as cofactor. Requires Zn(2+) as cofactor.

The protein localises to the cytoplasm. It catalyses the reaction 1-(5-phospho-beta-D-ribosyl)-5'-AMP + H2O = 1-(5-phospho-beta-D-ribosyl)-5-[(5-phospho-beta-D-ribosylamino)methylideneamino]imidazole-4-carboxamide. The protein operates within amino-acid biosynthesis; L-histidine biosynthesis; L-histidine from 5-phospho-alpha-D-ribose 1-diphosphate: step 3/9. Its function is as follows. Catalyzes the hydrolysis of the adenine ring of phosphoribosyl-AMP. The sequence is that of Phosphoribosyl-AMP cyclohydrolase from Zymomonas mobilis subsp. mobilis (strain ATCC 31821 / ZM4 / CP4).